The primary structure comprises 110 residues: Iron-sulfur cluster assembly protein CyaY (110 aa).

It belongs to the frataxin family.

Involved in iron-sulfur (Fe-S) cluster assembly. May act as a regulator of Fe-S biogenesis. This Ectopseudomonas mendocina (strain ymp) (Pseudomonas mendocina) protein is Iron-sulfur cluster assembly protein CyaY.